A 438-amino-acid chain; its full sequence is 23S rRNA (uracil(1939)-C(5))-methyltransferase RlmD (438 aa).

Residues 10–68 (RVTTRQTITVKVHDLDSFGQGVAHHNGKALFVQGALPDEVAEVSIIEDKRHFSRGVATR) form the TRAM domain. Cys81, Cys87, Cys90, and Cys168 together coordinate [4Fe-4S] cluster. The S-adenosyl-L-methionine site is built by Gln271, Phe300, Asn305, Glu321, Asn348, and Asp369. The active-site Nucleophile is Cys395.

This sequence belongs to the class I-like SAM-binding methyltransferase superfamily. RNA M5U methyltransferase family. RlmD subfamily.

It carries out the reaction uridine(1939) in 23S rRNA + S-adenosyl-L-methionine = 5-methyluridine(1939) in 23S rRNA + S-adenosyl-L-homocysteine + H(+). Its function is as follows. Catalyzes the formation of 5-methyl-uridine at position 1939 (m5U1939) in 23S rRNA. The chain is 23S rRNA (uracil(1939)-C(5))-methyltransferase RlmD from Erwinia tasmaniensis (strain DSM 17950 / CFBP 7177 / CIP 109463 / NCPPB 4357 / Et1/99).